Consider the following 393-residue polypeptide: MRYDVVVVGSGVAGPIVARNVAKAGFSVLLVDKKPAIGAPKQCAEGLTINAFKQFDIPYDKRFINREIYGAKIYSPSGYTAELRYKEVSGVILERKVFDKMLAYYAAKAGAEVLARTEVVDVIRREGKIVGVKAKHEGEPMEIEAKVIVAADGVESTIARKAGIDTYAPPHEFDSGYEYEMIIEGFDPDLIHLFFGNEVAPRGYVWVFPKDEDRANVGIGINSDNEKTAKYYLDKWLKENNIPRNKILEVNVGLIPVGGFVKELVKENVLVVGDAARQVNPIHGGGMAEAMKASTIASKWIIKALEEENLELLKNYKEEWWKTEGPRMEKLLRLRRAMEKLTDEDLDVFVQLVSGTDLEKIAGGNYIEVVKALMKHPKVLMSRRRLEILKALL.

FAD is bound by residues alanine 13, aspartate 32, cysteine 43, alanine 44, glycine 46, arginine 95, valine 119, aspartate 274, and glycine 286. Residues arginine 327 and glycine 363 each contribute to the a 2,3-bis-O-(geranylgeranyl)-sn-glycerol 1-phospholipid site.

This sequence belongs to the geranylgeranyl reductase family. DGGGPL reductase subfamily. FAD serves as cofactor.

It carries out the reaction a 2,3-bis-O-phytanyl-sn-glycerol 1-phospholipid + 8 A = a 2,3-bis-O-(geranylgeranyl)-sn-glycerol 1-phospholipid + 8 AH2. It catalyses the reaction 2,3-bis-O-(phytanyl)-sn-glycerol 1-phosphate + 8 A = 2,3-bis-O-(geranylgeranyl)-sn-glycerol 1-phosphate + 8 AH2. The catalysed reaction is CDP-2,3-bis-O-(geranylgeranyl)-sn-glycerol + 8 AH2 = CDP-2,3-bis-O-(phytanyl)-sn-glycerol + 8 A. The enzyme catalyses archaetidylserine + 8 AH2 = 2,3-bis-O-phytanyl-sn-glycero-3-phospho-L-serine + 8 A. It participates in membrane lipid metabolism; glycerophospholipid metabolism. Its function is as follows. Is involved in the reduction of 2,3-digeranylgeranylglycerophospholipids (unsaturated archaeols) into 2,3-diphytanylglycerophospholipids (saturated archaeols) in the biosynthesis of archaeal membrane lipids. Catalyzes the formation of archaetidic acid (2,3-di-O-phytanyl-sn-glyceryl phosphate) from 2,3-di-O-geranylgeranylglyceryl phosphate (DGGGP) via the hydrogenation of each double bond of the isoprenoid chains. Is also probably able to reduce double bonds of geranyl groups in CDP-2,3-bis-O-(geranylgeranyl)-sn-glycerol and archaetidylserine, thus acting at various stages in the biosynthesis of archaeal membrane lipids. In Pyrococcus horikoshii (strain ATCC 700860 / DSM 12428 / JCM 9974 / NBRC 100139 / OT-3), this protein is Digeranylgeranylglycerophospholipid reductase.